We begin with the raw amino-acid sequence, 83 residues long: RNA-binding protein Hfq (83 aa).

One can recognise a Sm domain in the interval 11–71; that stretch reads DVFLNYIRKN…ISTIMPASPV (61 aa).

It belongs to the Hfq family. Homohexamer.

In terms of biological role, RNA chaperone that binds small regulatory RNA (sRNAs) and mRNAs to facilitate mRNA translational regulation in response to envelope stress, environmental stress and changes in metabolite concentrations. Also binds with high specificity to tRNAs. The sequence is that of RNA-binding protein Hfq from Rhodospirillum rubrum (strain ATCC 11170 / ATH 1.1.1 / DSM 467 / LMG 4362 / NCIMB 8255 / S1).